Reading from the N-terminus, the 405-residue chain is MLSLYEAAQFRVHDEEILDEALKFTTTHLKLILPELSNSLLAQQVGNALKFPIKDGVVRVEARKYISFYQQNQNHNQVLLNFAKLDFNILQMLHKKELCDITRWWKELEIVKALPYVRDRLAEVYFWSLGVYFEPQYSTARKILTKNISMISLIDDTYDIYGTLDELTLFTEAIERWNIDASEQLQLPSYMKIIYCGLLDVYDEIKKDLANENKSFLINYSIIEMKKMVMAYFQEATWYYGKTIPKMEQYMKNGISTSAYVQIAATSWLGMGNVATKDSFDWIVNEPPILVASSIIARLLNDLLSHEEEQKRGDAPSSVECYMKEYGVTKEEAHIKIRNIIENSWKDLNEEYFKVNGTIIPRVLLMCIINLARVIEFIYKDEDAYTFSKNNLKDVVYRILIDPII.

Aspartate 155, aspartate 159, and glutamate 309 together coordinate Mg(2+). Positions 155–159 (DDTYD) match the DDXXD motif motif.

Belongs to the terpene synthase family. Tpsa subfamily. The cofactor is Mg(2+). It depends on Mn(2+) as a cofactor.

Its pathway is secondary metabolite biosynthesis; terpenoid biosynthesis. Sesquiterpene synthase involved in the biosynthesis of volatile compounds. No activity detected with geranyl diphosphate (GPP) and farnesyl diphosphate (FPP) as substrates. This Solanum habrochaites (Wild tomato) protein is Sesquiterpene synthase 16.